Reading from the N-terminus, the 649-residue chain is Transcription initiation factor IIF subunit alpha (649 aa).

The interval 201-480 (ALFGEVDNEK…ASSSSAATGP (280 aa)) is disordered. 5 stretches are compositionally biased toward acidic residues: residues 229–247 (GDEE…EEEE), 274–283 (LDMDDDDIEK), 293–308 (FTDD…EERE), 323–335 (QDED…EEEG), and 355–371 (DESD…EEET). Positions 380–389 (KQKEAAKEEP) are enriched in basic and acidic residues. Over residues 396-410 (KPAPSGPPRGTPPAK) the composition is skewed to pro residues. The span at 434–449 (VKTENDPKSSLKEERA) shows a compositional bias: basic and acidic residues. The segment covering 450 to 459 (NTVSKSNTPT) has biased composition (polar residues). A compositionally biased stretch (low complexity) spans 466 to 477 (PASAPASSSSAA). The required for CPL3 and CPL4 binding stretch occupies residues 466-543 (PASAPASSSS…SQNFVVLREK (78 aa)).

The protein belongs to the TFIIF alpha subunit family. As to quaternary structure, heterodimer of an alpha and a beta subunit. Interacts with CPL3 and CPL4.

The protein resides in the nucleus. In terms of biological role, TFIIF is a general transcription initiation factor that binds to RNA polymerase II and helps to recruit it to the initiation complex in collaboration with TFIIB. It promotes transcription elongation. The protein is Transcription initiation factor IIF subunit alpha (RAP74) of Arabidopsis thaliana (Mouse-ear cress).